A 499-amino-acid chain; its full sequence is Tetrathionate hydrolase (499 aa).

A signal peptide spans 1–32; the sequence is MPSIVRNHGPHNKILLSALLLALFGWVPLASA.

It belongs to the tetrathionate hydrolase family. Homodimer.

The protein localises to the cell membrane. The catalysed reaction is tetrathionate + H2O = sulfur + thiosulfate + sulfate + H(+). In terms of biological role, catalyzes the hydrolysis of tetrathionate to generate elemental sulfur, thiosulfate and sulfate. The protein is Tetrathionate hydrolase of Acidithiobacillus ferrooxidans (strain ATCC 23270 / DSM 14882 / CIP 104768 / NCIMB 8455) (Ferrobacillus ferrooxidans (strain ATCC 23270)).